The following is a 287-amino-acid chain: Lycopene elongase/hydratase (287 aa).

The next 7 membrane-spanning stretches (helical) occupy residues 15–35 (ISWINTAYPFGLAYLLNAGEI), 37–57 (WLFWLGIVFFLIPYNIAMYGI), 87–107 (TLLWASAISTIPFLVILFIFG), 137–157 (FIDALTSSTHFTSPALIGATI), 166–186 (MWIALGSFFLWGMASQILGAV), 218–238 (LLAAVLVTTLPNPAWIIGIAI), and 265–285 (VFLWLNYFVGAVITILLIAIH).

Belongs to the UbiA prenyltransferase family.

The protein resides in the cell membrane. It carries out the reaction all-trans-lycopene + dimethylallyl diphosphate + A + H2O = nonaflavuxanthin + AH2 + diphosphate. The catalysed reaction is nonaflavuxanthin + dimethylallyl diphosphate + A + H2O = flavuxanthin + AH2 + diphosphate. It functions in the pathway carotenoid biosynthesis. Catalyzes the elongation of the C(40) carotenoid all-trans-lycopene to the acyclic C(50) carotenoid flavuxanthin during decaprenoxanthin biosynthesis. Acts as a bifunctional enzyme that catalyzes the elongation of lycopene by attaching a C(5) isoprene unit at C-2, as well as the hydroxylation of the new isoprene unit. The enzyme acts at both ends of the substrate, forming the C(50) carotenoid flavuxanthin via the C(45) intermediate nonaflavuxanthin. In Corynebacterium glutamicum (strain ATCC 13032 / DSM 20300 / JCM 1318 / BCRC 11384 / CCUG 27702 / LMG 3730 / NBRC 12168 / NCIMB 10025 / NRRL B-2784 / 534), this protein is Lycopene elongase/hydratase.